The primary structure comprises 568 residues: MPTCWILNESVSFVVALLWLAINIYLFIDTFCWYAEEESFFYTRVILGSALAWARASAVCLNFNCMLILLPVSRNFVSLVRGTSVCCRGPWRRQLDKNLKFHKLVAYGIAVNSVIHIVAHLFNLERYHLGQAKDAEGLLAALSKLGNAPNESYLNPVRTLYTGTTTQLLMTVSGITGLVISLALILIMTSSTEFIRQSSYELFWYTHHIFIFLFISLAIHGGGRIIRGQTPESLRLHNVTFCRDHFDEWQEAASCPVPQFSGKEPSAWKWTLGPVVLYACEIIIRFWRSHQEVVITKVVSHPSAVLELHMKKRDFKMAPGQYIFIQCPSISPLEWHPFTLTSAPQEDFFSVHIRASGDWTEALLKAFGAEGQAPSELCSMPRLAVDGPFGGSLADVFHYPVSVCIATGIGVTPFASLLKSVWYKCCESQSLPGLSKVYFYWICRDAAAFEWFADLLLSLETQMSEQGKAHLLSYHIYLTGWDEYQAIHIALHWDESLDVITGLKQKTFYGRPNWNEEFKQIAYNHPSSSIGVFFCGPKAMSKTLQKMCRLYSSSDPRGVHFYYNKENF.

Residues 1–12 lie on the Cytoplasmic side of the membrane; it reads MPTCWILNESVS. Residues 13–33 traverse the membrane as a helical segment; the sequence is FVVALLWLAINIYLFIDTFCW. Residues 34–49 lie on the Extracellular side of the membrane; sequence YAEEESFFYTRVILGS. The helical transmembrane segment at 50 to 70 threads the bilayer; it reads ALAWARASAVCLNFNCMLILL. Residues 55 to 284 enclose the Ferric oxidoreductase domain; the sequence is RASAVCLNFN…VVLYACEIII (230 aa). The Cytoplasmic segment spans residues 71-103; the sequence is PVSRNFVSLVRGTSVCCRGPWRRQLDKNLKFHK. The helical transmembrane segment at 104 to 124 threads the bilayer; it reads LVAYGIAVNSVIHIVAHLFNL. Topologically, residues 125–167 are extracellular; that stretch reads ERYHLGQAKDAEGLLAALSKLGNAPNESYLNPVRTLYTGTTTQ. A helical membrane pass occupies residues 168 to 188; that stretch reads LLMTVSGITGLVISLALILIM. The Cytoplasmic segment spans residues 189 to 201; that stretch reads TSSTEFIRQSSYE. Residues 202 to 222 traverse the membrane as a helical segment; the sequence is LFWYTHHIFIFLFISLAIHGG. The Extracellular portion of the chain corresponds to 223–395; the sequence is GRIIRGQTPE…DGPFGGSLAD (173 aa). N238 carries N-linked (GlcNAc...) asparagine glycosylation. The 111-residue stretch at 285-395 folds into the FAD-binding FR-type domain; that stretch reads RFWRSHQEVV…DGPFGGSLAD (111 aa). Residues 396-416 form a helical membrane-spanning segment; it reads VFHYPVSVCIATGIGVTPFAS. Residues 417 to 568 are Cytoplasmic-facing; it reads LLKSVWYKCC…VHFYYNKENF (152 aa).

Forms a heterodimer with CYBA/p22phox which is essential for its activity and cell membrane localization. It depends on heme as a cofactor. In terms of processing, N-glycosylated in a CYBA/p22phox-dependent manner. As to expression, expressed in the inner ear by the spiral glanglia and the organ of Corti.

The protein resides in the cell membrane. The enzyme catalyses NADPH + 2 O2 = 2 superoxide + NADP(+) + H(+). Its activity is regulated as follows. Activated by the ototoxic drug cisplatin. Activated by NOXO1. Cooperatively activated by NCF1 and NCF2 or NOXA1 in a phorbol 12-myristate 13-acetate (PMA)-dependent manner. Inhibited by diphenyleneiodonium chloride. Functionally, NADPH oxidase that catalyzes the generation of superoxide from molecular oxygen utilizing NADPH as an electron donor, upon formation of a complex with CYBA/p22phox. Plays a role in the biogenesis of otoconia/otolith, which are crystalline structures of the inner ear involved in the perception of gravity. The polypeptide is NADPH oxidase 3 (Nox3) (Rattus norvegicus (Rat)).